A 400-amino-acid chain; its full sequence is Betaine--homocysteine S-methyltransferase 1 (400 aa).

The Hcy-binding domain occupies 8–309 (RGVLERLNAG…YHIRAVAEEL (302 aa)). C212, C294, and C295 together coordinate Zn(2+).

Homotetramer. Zn(2+) serves as cofactor.

Its subcellular location is the cytoplasm. The enzyme catalyses L-homocysteine + glycine betaine = N,N-dimethylglycine + L-methionine. Its pathway is amine and polyamine degradation; betaine degradation; sarcosine from betaine: step 1/2. It functions in the pathway amino-acid biosynthesis; L-methionine biosynthesis via de novo pathway; L-methionine from L-homocysteine (BhmT route): step 1/1. Involved in the regulation of homocysteine metabolism. Converts betaine and homocysteine to dimethylglycine and methionine, respectively. This reaction is also required for the irreversible oxidation of choline. This chain is Betaine--homocysteine S-methyltransferase 1 (bhmt), found in Danio rerio (Zebrafish).